The following is a 436-amino-acid chain: Trigger factor (436 aa).

The PPIase FKBP-type domain occupies 161–246; sequence EDQLNIDFVG…VNTVSEPKLP (86 aa).

This sequence belongs to the FKBP-type PPIase family. Tig subfamily.

The protein resides in the cytoplasm. The enzyme catalyses [protein]-peptidylproline (omega=180) = [protein]-peptidylproline (omega=0). Involved in protein export. Acts as a chaperone by maintaining the newly synthesized protein in an open conformation. Functions as a peptidyl-prolyl cis-trans isomerase. The polypeptide is Trigger factor (Pseudomonas syringae pv. syringae (strain B728a)).